Here is a 1159-residue protein sequence, read N- to C-terminus: CRISPR-associated endoribonuclease Cas13a (1159 aa).

The interval 1-11 (MKVTKVGGISH) is binds crRNA repeat and spacer. The tract at residues 1-170 (MKVTKVGGIS…NNIEKVEGKS (170 aa)) is NTD. Binds crRNA repeat regions lie at residues 139–151 (NKIN…FEKN), 172–176 (RNIIY), 224–233 (REFYHEIIGR), 271–276 (QVFYKY), 294–297 (HFVE), and 301–305 (SQLLK). Residues 171 to 360 (KRNIIYDYYR…YNYYLQDGEI (190 aa)) form a helical-1 region. Residues 319–328 (KIKRIFEYQN) are binds crRNA processing site. Binds crRNA repeat regions lie at residues 336-340 (KLLNK) and 371-378 (QNEAFLRN). Residues 361 to 508 (ATSDFIARNR…SKKMFQNEIN (148 aa)) form an HEPN-like fold 1-I region. Active-site for target RNA cleavage residues include R472 and H477. The helical-2 stretch occupies residues 509 to 751 (EKKLKLKIFR…EFLREIKLGN (243 aa)). Residues 519–522 (QLNS) are binds target RNA. The tract at residues 547–558 (NKNIPFVPSFTK) is binds crRNA spacer. Positions 590–597 (DAQIYLLK) are binds target RNA. The tract at residues 718-722 (KQEFD) is binds crRNA spacer. The HEPN-like fold 1-II stretch occupies residues 752-813 (ILKYTERLNM…NLDNNRVTED (62 aa)). The binds crRNA repeat stretch occupies residues 780-783 (SLEK). The binds crRNA spacer and target RNA stretch occupies residues 804 to 810 (NLDNNRV). Residues 814-946 (FELEADEIGK…EYTHLKNKVE (133 aa)) are linker. Binds crRNA spacer regions lie at residues 845-857 (KIYF…IKHR) and 938-942 (YTHLK). The stretch at 880–946 (YKISIEELKK…EYTHLKNKVE (67 aa)) forms a coiled coil. Residues 947–1159 (FNELNLLQGL…YKMEEKKSEN (213 aa)) are HEPN-like fold 2. Residues 962-963 (HR) are binds crRNA repeat. Residues 995 to 998 (FENK) form a binds 3'-end of target RNA, in adjacent protein region. Residues R1048 and H1053 each act as for target RNA cleavage in the active site. Binds crRNA processing site regions lie at residues 1072–1082 (RKLLSYDRKLK) and 1104–1108 (IGADK).

This sequence belongs to the CRISPR-associated endoribonuclease Cas13a family. In terms of assembly, crystals show the 3'-end of target RNA interacting with an adjacent protein molecule, and mutagenesis of those amino acid residues decreases target RNA cleavage, but it is not clear if this is physiological. It depends on a divalent metal cation as a cofactor.

With respect to regulation, target RNA acts as an activator for non-specific ssRNA cleavage; the target RNA and complementary crRNA must both be at least 20 nucleotides long to activate the HEPN-like catalytic pocket for RNase activity. CRISPR (clustered regularly interspaced short palindromic repeat), is an adaptive immune system that provides protection against mobile genetic elements (viruses, transposable elements and conjugative plasmids). CRISPR clusters contain sequences complementary to antecedent mobile elements (spacer sequences) and target invading nucleic acids. Unlike many single-component effectors, this CRISPR-Cas system targets RNA. CRISPR clusters are transcribed from pre-CRISPR RNA (crRNA) and processed into crRNA by this protein. pre-crRNA processing yields a 5'-OH and probably a 2',3'-cyclic phosphate. Also cleaves pre-crRNA from several other type VI-A CRISPR systems. Cleaves linear target ssRNA in a crRNA-dependent fashion, preferentially before U residues. Cleavage of target ssRNA is about 80-fold faster than pre-crRNA processing and uses a different active site. Binding a viable target RNA target activates this protein for non-specific RNA degradation in vitro (called collateral RNA degradation). Activation occurs with 10 fM target RNA. crRNA maturation is not essential for activation of RNA degradation, but lack of mature crRNA (due to mutagenesis) decreases activation levels. This system has a 3' protospacer flanking site in the target RNA (PFS), which is C and unavailable to base pair with crRNA (PFS is equivalent to PAM, the protospacer adjacent motif). The polypeptide is CRISPR-associated endoribonuclease Cas13a (Leptotrichia buccalis (strain ATCC 14201 / DSM 1135 / JCM 12969 / NCTC 10249 / C-1013-b)).